A 199-amino-acid chain; its full sequence is uncharacterized protein (199 aa).

This is an uncharacterized protein from Connochaetes taurinus (Blue wildebeest).